A 379-amino-acid chain; its full sequence is UDP-4-amino-4-deoxy-L-arabinose--oxoglutarate aminotransferase (379 aa).

An N6-(pyridoxal phosphate)lysine modification is found at K182.

This sequence belongs to the DegT/DnrJ/EryC1 family. ArnB subfamily. Homodimer. The cofactor is pyridoxal 5'-phosphate.

The enzyme catalyses UDP-4-amino-4-deoxy-beta-L-arabinose + 2-oxoglutarate = UDP-beta-L-threo-pentopyranos-4-ulose + L-glutamate. Its pathway is nucleotide-sugar biosynthesis; UDP-4-deoxy-4-formamido-beta-L-arabinose biosynthesis; UDP-4-deoxy-4-formamido-beta-L-arabinose from UDP-alpha-D-glucuronate: step 2/3. It participates in bacterial outer membrane biogenesis; lipopolysaccharide biosynthesis. Catalyzes the conversion of UDP-4-keto-arabinose (UDP-Ara4O) to UDP-4-amino-4-deoxy-L-arabinose (UDP-L-Ara4N). The modified arabinose is attached to lipid A and is required for resistance to polymyxin and cationic antimicrobial peptides. This is UDP-4-amino-4-deoxy-L-arabinose--oxoglutarate aminotransferase from Escherichia coli O127:H6 (strain E2348/69 / EPEC).